The following is a 242-amino-acid chain: Dehydration-responsive element-binding protein 1J (242 aa).

Residues 20 to 29 show a composition bias toward low complexity; the sequence is SSATTAATAT. The disordered stretch occupies residues 20–44; the sequence is SSATTAATATGPASPKRPAGRTKFQ. The AP2/ERF DNA-binding region spans 50–109; that stretch reads VFRGVRRRGRAGRWVCEVRVPGSRGDRLWVGTFDTAEEAARAHDAAMLAMCGASASLNFT. The disordered stretch occupies residues 143–184; the sequence is FQRRGSTAATATATSGDAASTAPPSSSPVLSPNDDNASSAST. The span at 148 to 184 shows a compositional bias: low complexity; the sequence is STAATATATSGDAASTAPPSSSPVLSPNDDNASSAST.

This sequence belongs to the AP2/ERF transcription factor family. ERF subfamily.

The protein resides in the nucleus. Functionally, transcriptional activator that binds specifically to the DNA sequence 5'-[AG]CCGAC-3'. Binding to the C-repeat/DRE element mediates high salinity- and dehydration-inducible transcription. The polypeptide is Dehydration-responsive element-binding protein 1J (DREB1J) (Oryza sativa subsp. indica (Rice)).